Consider the following 506-residue polypeptide: Histidine ammonia-lyase (506 aa).

Residues 143-145 constitute a cross-link (5-imidazolinone (Ala-Gly)); the sequence is ASG. Residue serine 144 is modified to 2,3-didehydroalanine (Ser).

It belongs to the PAL/histidase family. Post-translationally, contains an active site 4-methylidene-imidazol-5-one (MIO), which is formed autocatalytically by cyclization and dehydration of residues Ala-Ser-Gly.

It localises to the cytoplasm. It carries out the reaction L-histidine = trans-urocanate + NH4(+). Its pathway is amino-acid degradation; L-histidine degradation into L-glutamate; N-formimidoyl-L-glutamate from L-histidine: step 1/3. This Salmonella arizonae (strain ATCC BAA-731 / CDC346-86 / RSK2980) protein is Histidine ammonia-lyase.